The sequence spans 132 residues: Small ribosomal subunit protein uS8 (132 aa).

It belongs to the universal ribosomal protein uS8 family. As to quaternary structure, part of the 30S ribosomal subunit. Contacts proteins S5 and S12.

Its function is as follows. One of the primary rRNA binding proteins, it binds directly to 16S rRNA central domain where it helps coordinate assembly of the platform of the 30S subunit. In Paramagnetospirillum magneticum (strain ATCC 700264 / AMB-1) (Magnetospirillum magneticum), this protein is Small ribosomal subunit protein uS8.